The sequence spans 110 residues: Parvalbumin alpha (110 aa).

S2 is modified (N-acetylserine). A phosphoserine mark is found at S2, S8, and S24. 2 EF-hand domains span residues 39–74 (KNPDEVKKVFHILDKDKSGFIEEDELGSILKGFSSD) and 78–110 (LSAKETKTLLAAGDKDGDGKIGVEEFSTLVAES). D52, D54, S56, F58, E60, E63, D91, D93, D95, K97, and E102 together coordinate Ca(2+).

As to expression, expressed in the modiolar nerve root (at protein level).

In terms of biological role, in muscle, parvalbumin is thought to be involved in relaxation after contraction. It binds two calcium ions. The polypeptide is Parvalbumin alpha (Pvalb) (Mus musculus (Mouse)).